Here is a 209-residue protein sequence, read N- to C-terminus: Probable phosphatase C1687.21 (209 aa).

Catalysis depends on H8, which acts as the Tele-phosphohistidine intermediate. E82 functions as the Proton donor/acceptor in the catalytic mechanism.

The protein belongs to the phosphoglycerate mutase family. BPG-dependent PGAM subfamily.

It localises to the cytoplasm. It is found in the nucleus. The polypeptide is Probable phosphatase C1687.21 (Schizosaccharomyces pombe (strain 972 / ATCC 24843) (Fission yeast)).